Here is a 119-residue protein sequence, read N- to C-terminus: Large ribosomal subunit protein bL20 (119 aa).

This sequence belongs to the bacterial ribosomal protein bL20 family.

In terms of biological role, binds directly to 23S ribosomal RNA and is necessary for the in vitro assembly process of the 50S ribosomal subunit. It is not involved in the protein synthesizing functions of that subunit. The chain is Large ribosomal subunit protein bL20 from Deinococcus geothermalis (strain DSM 11300 / CIP 105573 / AG-3a).